Reading from the N-terminus, the 184-residue chain is MIRAIEGIITKKEPAFVVLKTAGGVSYGLFISLFCSAKLSKGEKVELNTTQIIREDANLLYGFLDTNEQKMFEMLIKLNGIGASTAMAICSSLSPNAFSNAVINGDADTFKSVPGIGPKTARRIIAELSDAKLISDESVPGYQNEALLALEALGFKREKIVKILPDLKSTSTSELVKEALKKLA.

Residues 1 to 64 are domain I; it reads MIRAIEGIIT…EDANLLYGFL (64 aa). Residues 65 to 144 form a domain II region; it reads DTNEQKMFEM…SDESVPGYQN (80 aa). A region of interest (flexible linker) is located at residue Asn144. Residues 144–184 form a domain III region; it reads NEALLALEALGFKREKIVKILPDLKSTSTSELVKEALKKLA.

Belongs to the RuvA family. In terms of assembly, homotetramer. Forms an RuvA(8)-RuvB(12)-Holliday junction (HJ) complex. HJ DNA is sandwiched between 2 RuvA tetramers; dsDNA enters through RuvA and exits via RuvB. An RuvB hexamer assembles on each DNA strand where it exits the tetramer. Each RuvB hexamer is contacted by two RuvA subunits (via domain III) on 2 adjacent RuvB subunits; this complex drives branch migration. In the full resolvosome a probable DNA-RuvA(4)-RuvB(12)-RuvC(2) complex forms which resolves the HJ.

The protein localises to the cytoplasm. Functionally, the RuvA-RuvB-RuvC complex processes Holliday junction (HJ) DNA during genetic recombination and DNA repair, while the RuvA-RuvB complex plays an important role in the rescue of blocked DNA replication forks via replication fork reversal (RFR). RuvA specifically binds to HJ cruciform DNA, conferring on it an open structure. The RuvB hexamer acts as an ATP-dependent pump, pulling dsDNA into and through the RuvAB complex. HJ branch migration allows RuvC to scan DNA until it finds its consensus sequence, where it cleaves and resolves the cruciform DNA. In Campylobacter curvus (strain 525.92), this protein is Holliday junction branch migration complex subunit RuvA.